We begin with the raw amino-acid sequence, 263 residues long: 4-hydroxy-tetrahydrodipicolinate reductase (263 aa).

Residues 8 to 13, Asp34, 99 to 101, and 125 to 128 each bind NAD(+); these read GACGRM, GTT, and SPNY. His157 serves as the catalytic Proton donor/acceptor. (S)-2,3,4,5-tetrahydrodipicolinate is bound at residue His158. The active-site Proton donor is Lys161. 167-168 serves as a coordination point for (S)-2,3,4,5-tetrahydrodipicolinate; it reads GT.

The protein belongs to the DapB family.

The protein localises to the cytoplasm. The enzyme catalyses (S)-2,3,4,5-tetrahydrodipicolinate + NAD(+) + H2O = (2S,4S)-4-hydroxy-2,3,4,5-tetrahydrodipicolinate + NADH + H(+). It carries out the reaction (S)-2,3,4,5-tetrahydrodipicolinate + NADP(+) + H2O = (2S,4S)-4-hydroxy-2,3,4,5-tetrahydrodipicolinate + NADPH + H(+). The protein operates within amino-acid biosynthesis; L-lysine biosynthesis via DAP pathway; (S)-tetrahydrodipicolinate from L-aspartate: step 4/4. Catalyzes the conversion of 4-hydroxy-tetrahydrodipicolinate (HTPA) to tetrahydrodipicolinate. The chain is 4-hydroxy-tetrahydrodipicolinate reductase from Methanosarcina mazei (strain ATCC BAA-159 / DSM 3647 / Goe1 / Go1 / JCM 11833 / OCM 88) (Methanosarcina frisia).